A 417-amino-acid polypeptide reads, in one-letter code: Serine hydroxymethyltransferase (417 aa).

Residues leucine 121 and 125–127 (GHL) each bind (6S)-5,6,7,8-tetrahydrofolate. An N6-(pyridoxal phosphate)lysine modification is found at lysine 229. A (6S)-5,6,7,8-tetrahydrofolate-binding site is contributed by 355–357 (SPF).

It belongs to the SHMT family. In terms of assembly, homodimer. Requires pyridoxal 5'-phosphate as cofactor.

The protein resides in the cytoplasm. It catalyses the reaction (6R)-5,10-methylene-5,6,7,8-tetrahydrofolate + glycine + H2O = (6S)-5,6,7,8-tetrahydrofolate + L-serine. The protein operates within one-carbon metabolism; tetrahydrofolate interconversion. It participates in amino-acid biosynthesis; glycine biosynthesis; glycine from L-serine: step 1/1. Its function is as follows. Catalyzes the reversible interconversion of serine and glycine with tetrahydrofolate (THF) serving as the one-carbon carrier. This reaction serves as the major source of one-carbon groups required for the biosynthesis of purines, thymidylate, methionine, and other important biomolecules. Also exhibits THF-independent aldolase activity toward beta-hydroxyamino acids, producing glycine and aldehydes, via a retro-aldol mechanism. In Shewanella sp. (strain ANA-3), this protein is Serine hydroxymethyltransferase.